A 495-amino-acid chain; its full sequence is ATP synthase subunit beta (495 aa).

178 to 185 (GGAGVGKT) contacts ATP.

It belongs to the ATPase alpha/beta chains family. As to quaternary structure, F-type ATPases have 2 components, CF(1) - the catalytic core - and CF(0) - the membrane proton channel. CF(1) has five subunits: alpha(3), beta(3), gamma(1), delta(1), epsilon(1). CF(0) has three main subunits: a(1), b(2) and c(9-12). The alpha and beta chains form an alternating ring which encloses part of the gamma chain. CF(1) is attached to CF(0) by a central stalk formed by the gamma and epsilon chains, while a peripheral stalk is formed by the delta and b chains.

Its subcellular location is the cell membrane. It catalyses the reaction ATP + H2O + 4 H(+)(in) = ADP + phosphate + 5 H(+)(out). In terms of biological role, produces ATP from ADP in the presence of a proton gradient across the membrane. The catalytic sites are hosted primarily by the beta subunits. In Bifidobacterium animalis subsp. lactis (strain AD011), this protein is ATP synthase subunit beta.